Consider the following 158-residue polypeptide: Phosphopantetheine adenylyltransferase (158 aa).

T9 contacts substrate. ATP contacts are provided by residues 9–10 and H17; that span reads TF. Substrate contacts are provided by K41, L73, and R87. Residues 88–90, E98, and 123–129 contribute to the ATP site; these read GVR and WSYVSST.

It belongs to the bacterial CoaD family. In terms of assembly, homohexamer. Mg(2+) serves as cofactor.

Its subcellular location is the cytoplasm. It catalyses the reaction (R)-4'-phosphopantetheine + ATP + H(+) = 3'-dephospho-CoA + diphosphate. It functions in the pathway cofactor biosynthesis; coenzyme A biosynthesis; CoA from (R)-pantothenate: step 4/5. In terms of biological role, reversibly transfers an adenylyl group from ATP to 4'-phosphopantetheine, yielding dephospho-CoA (dPCoA) and pyrophosphate. In Pasteurella multocida (strain Pm70), this protein is Phosphopantetheine adenylyltransferase.